Consider the following 341-residue polypeptide: L-threonine 3-dehydrogenase (341 aa).

Residue C38 coordinates Zn(2+). Catalysis depends on charge relay system residues T40 and H43. The Zn(2+) site is built by H63, E64, C93, C96, C99, and C107. NAD(+)-binding positions include I175, D195, R200, 262–264 (LGI), and 286–287 (IY).

It belongs to the zinc-containing alcohol dehydrogenase family. In terms of assembly, homotetramer. Zn(2+) serves as cofactor.

It localises to the cytoplasm. It carries out the reaction L-threonine + NAD(+) = (2S)-2-amino-3-oxobutanoate + NADH + H(+). It functions in the pathway amino-acid degradation; L-threonine degradation via oxydo-reductase pathway; glycine from L-threonine: step 1/2. Functionally, catalyzes the NAD(+)-dependent oxidation of L-threonine to 2-amino-3-ketobutyrate. This Enterobacter sp. (strain 638) protein is L-threonine 3-dehydrogenase.